The primary structure comprises 189 residues: Ribosome maturation factor RimM (189 aa).

Residues 96–169 (EDEFYYADLE…TLLIDPLAAG (74 aa)) enclose the PRC barrel domain.

Belongs to the RimM family. Binds ribosomal protein uS19.

It localises to the cytoplasm. In terms of biological role, an accessory protein needed during the final step in the assembly of 30S ribosomal subunit, possibly for assembly of the head region. Essential for efficient processing of 16S rRNA. May be needed both before and after RbfA during the maturation of 16S rRNA. It has affinity for free ribosomal 30S subunits but not for 70S ribosomes. The chain is Ribosome maturation factor RimM from Rhizobium johnstonii (strain DSM 114642 / LMG 32736 / 3841) (Rhizobium leguminosarum bv. viciae).